Reading from the N-terminus, the 498-residue chain is N-acyl-D-aspartate deacylase (498 aa).

Residues Ala478–Glu498 form a disordered region.

It belongs to the metallo-dependent hydrolases superfamily. N-acyl-D-amino-acid deacylase family. The cofactor is Zn(2+).

Its subcellular location is the cytoplasm. The catalysed reaction is an N-acyl-D-aspartate + H2O = D-aspartate + a carboxylate. This Alcaligenes xylosoxydans xylosoxydans (Achromobacter xylosoxidans) protein is N-acyl-D-aspartate deacylase.